The following is a 1288-amino-acid chain: Contactin-associated protein-like 3B (1288 aa).

The signal sequence occupies residues 1-25 (MASVAWAVLKVLLLLPTQTWSPVGA). The tract at residues 23–61 (VGAGNPPDCDSPLASALPRSSFSSSSELSSSHGPGFSRL) is disordered. At 26–1245 (GNPPDCDSPL…LVNADRRDSA (1220 aa)) the chain is on the extracellular side. The F5/8 type C domain occupies 31–177 (CDSPLASALP…IGMRIEVYGC (147 aa)). Cystine bridges form between Cys31/Cys177, Cys332/Cys364, Cys513/Cys545, Cys551/Cys562, Cys556/Cys571, and Cys573/Cys583. The span at 33–59 (SPLASALPRSSFSSSSELSSSHGPGFS) shows a compositional bias: low complexity. Laminin G-like domains lie at 183-364 (VVYF…SFSC) and 370-545 (VPVT…IDSC). A glycan (N-linked (GlcNAc...) asparagine) is linked at Asn359. An EGF-like 1 domain is found at 547–584 (ITDRCLPSYCEHGGECSQSWDTFSCDCLGTGYTGETCH). The Fibrinogen C-terminal domain maps to 585–792 (SSLYEQSCEA…LLCRGDKSFW (208 aa)). N-linked (GlcNAc...) asparagine glycosylation occurs at Asn706. The Laminin G-like 3 domain occupies 793–958 (NSASFNTETS…TVTPGVEPGC (166 aa)). 5 disulfide bridges follow: Cys931/Cys958, Cys962/Cys975, Cys969/Cys984, Cys986/Cys996, and Cys1167/Cys1203. The region spanning 959–997 (AGHCSTYGHLCRNGGRCREKRRGVTCDCAFSAYDGPFCS) is the EGF-like 2 domain. Residues 1016 to 1203 (EHYTLSENSS…RGHVAPMARC (188 aa)) enclose the Laminin G-like 4 domain. A disordered region spans residues 1215-1236 (ELAPRLAGGAGRSGPVDEGEPL). Residues 1246–1266 (VIGGVIAVEIFILLCITAIAI) form a helical membrane-spanning segment. Residues 1267-1288 (RIYQQRKLRKENESKVSKKEEC) are Cytoplasmic-facing.

Belongs to the neurexin family.

It localises to the membrane. The sequence is that of Contactin-associated protein-like 3B (CNTNAP3B) from Homo sapiens (Human).